The chain runs to 431 residues: Nuclear receptor subfamily 1 group I member 2 (431 aa).

A DNA-binding region (nuclear receptor) is located at residues 35–104; sequence LQICRVCGDK…RLRKCLESGM (70 aa). 2 NR C4-type zinc fingers span residues 38-58 and 74-99; these read CRVC…CEGC and CPFR…LRKC. Residues 63–89 carry the Bipartite nuclear localization signal motif; it reads RRAMKRNVRLRCPFRKGTCEITRKTRR. Positions 105–142 are hinge; the sequence is KKEMIMSDAAVEQRRALIKRKKREKIEAPPPGGQGLTE. An NR LBD domain is found at 143-430; it reads EQQALIQELM…LMQELFSSTD (288 aa). Hyperforin is bound by residues serine 244 and 282-285; that span reads ILRF.

Belongs to the nuclear hormone receptor family. NR1 subfamily. In terms of assembly, heterodimer with RXRA. Interacts with NCOA1. Interacts (via domain NR LBD) with CRY1 and CRY2 in a ligand-dependent manner.

It localises to the nucleus. In terms of biological role, nuclear receptor that binds and is activated by a variety of endogenous and xenobiotic compounds. Transcription factor that activates the transcription of multiple genes involved in the metabolism and secretion of potentially harmful xenobiotics, endogenous compounds and drugs. Response to specific ligands is species-specific, due to differences in the ligand-binding domain. Binds to a response element in the promoters of the CYP3A4 and ABCB1/MDR1 genes. Activated by naturally occurring steroids such as pregnenolone and progesterone, the cholesterol metabolite 5-beta-cholestane-3-alpha,7-alpha,12-alpha-triol, synthetic glucocorticoids and antiglucocorticoids and 16-alpha-carbonitrile (PCN). The sequence is that of Nuclear receptor subfamily 1 group I member 2 (Nr1i2) from Mus musculus (Mouse).